The primary structure comprises 134 residues: MALKIRLARAGSKKRPYYHIVVADVRAPRDGRFIEQIGSWNPMLPKDSERVKLNEERIKHWLANGALPTDRVLRFLDQAGLAKRPARSNPKKAEPGKKAQERLAAARQAEEEAKAAAEAAAAAPAEAPAEEAAS.

The segment at 81-134 (LAKRPARSNPKKAEPGKKAQERLAAARQAEEEAKAAAEAAAAAPAEAPAEEAAS) is disordered. The span at 91 to 101 (KKAEPGKKAQE) shows a compositional bias: basic and acidic residues. The segment covering 116-134 (AAEAAAAAPAEAPAEEAAS) has biased composition (low complexity).

The protein belongs to the bacterial ribosomal protein bS16 family.

The protein is Small ribosomal subunit protein bS16 of Chelativorans sp. (strain BNC1).